Consider the following 252-residue polypeptide: Hydroxyacylglutathione hydrolase (252 aa).

Zn(2+)-binding residues include His54, His56, Asp58, His59, His113, Asp132, and His170.

Belongs to the metallo-beta-lactamase superfamily. Glyoxalase II family. Monomer. Requires Zn(2+) as cofactor.

It carries out the reaction an S-(2-hydroxyacyl)glutathione + H2O = a 2-hydroxy carboxylate + glutathione + H(+). It participates in secondary metabolite metabolism; methylglyoxal degradation; (R)-lactate from methylglyoxal: step 2/2. In terms of biological role, thiolesterase that catalyzes the hydrolysis of S-D-lactoyl-glutathione to form glutathione and D-lactic acid. This chain is Hydroxyacylglutathione hydrolase, found in Synechococcus sp. (strain JA-3-3Ab) (Cyanobacteria bacterium Yellowstone A-Prime).